We begin with the raw amino-acid sequence, 358 residues long: Sesquiterpene synthase Agr3 (358 aa).

The Mg(2+) site is built by aspartate 99, asparagine 246, serine 250, and glutamate 254. Residues 99–103 (DNISD) carry the DDXXD motif motif. Residues arginine 334 and tyrosine 335 each contribute to the (2E,6E)-farnesyl diphosphate site.

It belongs to the terpene synthase family. Mg(2+) serves as cofactor.

The catalysed reaction is (2E,6E)-farnesyl diphosphate = alpha-muurolene + diphosphate. The enzyme catalyses (2E,6E)-farnesyl diphosphate = gamma-muurolene + diphosphate. It catalyses the reaction (2E,6E)-farnesyl diphosphate = delta-cadinene + diphosphate. Its function is as follows. Terpene cyclase that catalyzes the cyclization of farnesyl diphosphate (FPP) to various sesquiterpenes, including alpha-muurolene, gamma-muurolene, germacrene, delta-cadinene, delta-cadinol and cubenol. The protein is Sesquiterpene synthase Agr3 of Cyclocybe aegerita (Black poplar mushroom).